The chain runs to 157 residues: Transcriptional repressor NrdR (157 aa).

A zinc finger lies at 3–34 (CPFCRHPDSRVIDSRTSDDGLSIRRRRQCPEC). The ATP-cone domain maps to 46-136 (LSVIKRSGVV…VYQAFDSLED (91 aa)).

This sequence belongs to the NrdR family. It depends on Zn(2+) as a cofactor.

Functionally, negatively regulates transcription of bacterial ribonucleotide reductase nrd genes and operons by binding to NrdR-boxes. The polypeptide is Transcriptional repressor NrdR (Leifsonia xyli subsp. xyli (strain CTCB07)).